The sequence spans 209 residues: Uracil phosphoribosyltransferase (209 aa).

Residues arginine 79, arginine 104, and 131–139 (DPMLATANS) each bind 5-phospho-alpha-D-ribose 1-diphosphate. Residues isoleucine 194 and 199–201 (GDA) each bind uracil. Residue aspartate 200 participates in 5-phospho-alpha-D-ribose 1-diphosphate binding.

Belongs to the UPRTase family. It depends on Mg(2+) as a cofactor.

It catalyses the reaction UMP + diphosphate = 5-phospho-alpha-D-ribose 1-diphosphate + uracil. The protein operates within pyrimidine metabolism; UMP biosynthesis via salvage pathway; UMP from uracil: step 1/1. Its activity is regulated as follows. Allosterically activated by GTP. Its function is as follows. Catalyzes the conversion of uracil and 5-phospho-alpha-D-ribose 1-diphosphate (PRPP) to UMP and diphosphate. This chain is Uracil phosphoribosyltransferase, found in Mesorhizobium japonicum (strain LMG 29417 / CECT 9101 / MAFF 303099) (Mesorhizobium loti (strain MAFF 303099)).